Consider the following 660-residue polypeptide: Bifunctional polymyxin resistance protein ArnA (660 aa).

Positions 1 to 304 are formyltransferase ArnAFT; the sequence is MKAIVFAYHD…EMGIVTDVRL (304 aa). The active-site Proton donor; for formyltransferase activity is the H104. (6R)-10-formyltetrahydrofolate contacts are provided by residues R114 and 136–140; that span reads VKRPD. Residues 314-660 form a dehydrogenase ArnADH region; that stretch reads RRTRVLILGV…RTTVQEGDGA (347 aa). NAD(+) contacts are provided by residues D347 and 368 to 369; that span reads DI. UDP-alpha-D-glucuronate-binding positions include A393, Y398, and 432–433; that span reads TS. E434 acts as the Proton acceptor; for decarboxylase activity in catalysis. UDP-alpha-D-glucuronate is bound by residues R460, N492, 526 to 535, and Y613; that span reads KLMDGGAQKR. R619 acts as the Proton donor; for decarboxylase activity in catalysis.

It in the N-terminal section; belongs to the Fmt family. UDP-L-Ara4N formyltransferase subfamily. In the C-terminal section; belongs to the NAD(P)-dependent epimerase/dehydratase family. UDP-glucuronic acid decarboxylase subfamily. As to quaternary structure, homohexamer, formed by a dimer of trimers.

The catalysed reaction is UDP-alpha-D-glucuronate + NAD(+) = UDP-beta-L-threo-pentopyranos-4-ulose + CO2 + NADH. The enzyme catalyses UDP-4-amino-4-deoxy-beta-L-arabinose + (6R)-10-formyltetrahydrofolate = UDP-4-deoxy-4-formamido-beta-L-arabinose + (6S)-5,6,7,8-tetrahydrofolate + H(+). It functions in the pathway nucleotide-sugar biosynthesis; UDP-4-deoxy-4-formamido-beta-L-arabinose biosynthesis; UDP-4-deoxy-4-formamido-beta-L-arabinose from UDP-alpha-D-glucuronate: step 1/3. The protein operates within nucleotide-sugar biosynthesis; UDP-4-deoxy-4-formamido-beta-L-arabinose biosynthesis; UDP-4-deoxy-4-formamido-beta-L-arabinose from UDP-alpha-D-glucuronate: step 3/3. Its pathway is bacterial outer membrane biogenesis; lipopolysaccharide biosynthesis. Bifunctional enzyme that catalyzes the oxidative decarboxylation of UDP-glucuronic acid (UDP-GlcUA) to UDP-4-keto-arabinose (UDP-Ara4O) and the addition of a formyl group to UDP-4-amino-4-deoxy-L-arabinose (UDP-L-Ara4N) to form UDP-L-4-formamido-arabinose (UDP-L-Ara4FN). The modified arabinose is attached to lipid A and is required for resistance to polymyxin and cationic antimicrobial peptides. The sequence is that of Bifunctional polymyxin resistance protein ArnA from Serratia proteamaculans (strain 568).